The chain runs to 459 residues: tRNA modification GTPase MnmE (459 aa).

Positions 20, 85, and 124 each coordinate (6S)-5-formyl-5,6,7,8-tetrahydrofolate. Residues 221-380 form the TrmE-type G domain; it reads GLSTVIIGRP…LEEAIQSLFY (160 aa). Asn-231 is a binding site for K(+). GTP-binding positions include 231 to 236, 250 to 256, and 275 to 278; these read NVGKSS, TDIPGTT, and DTAG. Ser-235 lines the Mg(2+) pocket. Thr-250, Ile-252, and Thr-255 together coordinate K(+). Thr-256 serves as a coordination point for Mg(2+). (6S)-5-formyl-5,6,7,8-tetrahydrofolate is bound at residue Lys-459.

It belongs to the TRAFAC class TrmE-Era-EngA-EngB-Septin-like GTPase superfamily. TrmE GTPase family. Homodimer. Heterotetramer of two MnmE and two MnmG subunits. K(+) is required as a cofactor.

It is found in the cytoplasm. Its function is as follows. Exhibits a very high intrinsic GTPase hydrolysis rate. Involved in the addition of a carboxymethylaminomethyl (cmnm) group at the wobble position (U34) of certain tRNAs, forming tRNA-cmnm(5)s(2)U34. The protein is tRNA modification GTPase MnmE of Bacillus velezensis (strain DSM 23117 / BGSC 10A6 / LMG 26770 / FZB42) (Bacillus amyloliquefaciens subsp. plantarum).